Reading from the N-terminus, the 620-residue chain is Synchronized import protein 1 (620 aa).

Positions 1–32 are disordered; the sequence is MGRSKKRSRASSSRLNPLRKAGSNDNNKDTNV. ARM repeat units follow at residues 25–64, 66–106, 181–221, 258–299, 340–386, 435–470, 471–510, and 564–607; these read DNNK…VLCE, AHMR…NLSL, DDIL…TTLD, ANEL…NIDP, IKLQ…NFLP, DSQD…NRAL, INVQ…TYAM, and RGGF…TLDS.

It belongs to the nuclear import and ribosome assembly adapter family. As to quaternary structure, forms a heterotrimeric complex with RPL5 and RPL11A or RPL11B; interaction of this complex with KAP104 allows the nuclear import of the heterotrimer. Component of a hexameric 5S RNP precursor complex, composed of 5S RNA, RRS1, RPF2, RPL5, RPL11A/RPL11B and SYO1; this complex acts as a precursor for ribosome assembly.

It localises to the cytoplasm. The protein resides in the nucleus. Its function is as follows. Nuclear import adapter that specifically recruits the two functionally and topologically linked ribosomal proteins RPL5 and RPL11 (encoded by RPL11A and RPL11B). Guarantees that this cargo pair remains bound together from the time of synthesis in the cytoplasm until delivery to the nascent 5S rRNA in the nucleus. In Saccharomyces cerevisiae (strain ATCC 204508 / S288c) (Baker's yeast), this protein is Synchronized import protein 1 (SYO1).